Consider the following 223-residue polypeptide: 7-cyano-7-deazaguanine synthase (223 aa).

ATP is bound at residue phenylalanine 15–leucine 25. Zn(2+) contacts are provided by cysteine 191, cysteine 200, cysteine 203, and cysteine 206.

It belongs to the QueC family. As to quaternary structure, homodimer. The cofactor is Zn(2+).

It carries out the reaction 7-carboxy-7-deazaguanine + NH4(+) + ATP = 7-cyano-7-deazaguanine + ADP + phosphate + H2O + H(+). It functions in the pathway purine metabolism; 7-cyano-7-deazaguanine biosynthesis. Functionally, catalyzes the ATP-dependent conversion of 7-carboxy-7-deazaguanine (CDG) to 7-cyano-7-deazaguanine (preQ(0)). This is 7-cyano-7-deazaguanine synthase from Staphylococcus haemolyticus (strain JCSC1435).